Here is a 377-residue protein sequence, read N- to C-terminus: Ipis-1 (377 aa).

N11 and N226 each carry an N-linked (GlcNAc...) asparagine glycan.

Belongs to the serpin family. Female salivary gland. Not detected in midgut and other tissues.

The protein localises to the secreted. In terms of biological role, salivary protein with immunosuppressive properties that can modulate blood feeding of ticks on vertebrate species. Inhibits proliferation of bovine peripheral blood mononuclear cells (PBMCs). Inhibits IFN-gamma (IFNG) production by bovine PBMCs. This chain is Ipis-1, found in Ixodes persulcatus (Taiga tick).